A 687-amino-acid chain; its full sequence is Threonine--tRNA ligase (687 aa).

The region spanning 1-67 (MAHLIEAAPN…EQDSKFTPVP (67 aa)) is the TGS domain. The segment at 266 to 572 (DHRRLGAELD…LLEHYAGAFP (307 aa)) is catalytic. Residues cysteine 371, histidine 422, and histidine 549 each coordinate Zn(2+).

The protein belongs to the class-II aminoacyl-tRNA synthetase family. In terms of assembly, homodimer. Zn(2+) is required as a cofactor.

The protein localises to the cytoplasm. The enzyme catalyses tRNA(Thr) + L-threonine + ATP = L-threonyl-tRNA(Thr) + AMP + diphosphate + H(+). Functionally, catalyzes the attachment of threonine to tRNA(Thr) in a two-step reaction: L-threonine is first activated by ATP to form Thr-AMP and then transferred to the acceptor end of tRNA(Thr). Also edits incorrectly charged L-seryl-tRNA(Thr). The sequence is that of Threonine--tRNA ligase from Corynebacterium diphtheriae (strain ATCC 700971 / NCTC 13129 / Biotype gravis).